Here is a 346-residue protein sequence, read N- to C-terminus: Phenylalanine--tRNA ligase alpha subunit (346 aa).

Glutamate 261 lines the Mg(2+) pocket.

Belongs to the class-II aminoacyl-tRNA synthetase family. Phe-tRNA synthetase alpha subunit type 1 subfamily. In terms of assembly, tetramer of two alpha and two beta subunits. The cofactor is Mg(2+).

The protein localises to the cytoplasm. It catalyses the reaction tRNA(Phe) + L-phenylalanine + ATP = L-phenylalanyl-tRNA(Phe) + AMP + diphosphate + H(+). The sequence is that of Phenylalanine--tRNA ligase alpha subunit from Streptococcus agalactiae serotype Ia (strain ATCC 27591 / A909 / CDC SS700).